The following is a 106-amino-acid chain: Ribonuclease P protein component 4 (106 aa).

The Zn(2+) site is built by Cys63, Cys66, Cys89, and Cys92.

The protein belongs to the eukaryotic/archaeal RNase P protein component 4 family. As to quaternary structure, consists of a catalytic RNA component and at least 4-5 protein subunits. Zn(2+) is required as a cofactor.

The protein localises to the cytoplasm. It catalyses the reaction Endonucleolytic cleavage of RNA, removing 5'-extranucleotides from tRNA precursor.. Functionally, part of ribonuclease P, a protein complex that generates mature tRNA molecules by cleaving their 5'-ends. The sequence is that of Ribonuclease P protein component 4 from Methanosphaerula palustris (strain ATCC BAA-1556 / DSM 19958 / E1-9c).